Reading from the N-terminus, the 506-residue chain is Maturase K (506 aa).

Belongs to the intron maturase 2 family. MatK subfamily.

The protein localises to the plastid. It is found in the chloroplast. Functionally, usually encoded in the trnK tRNA gene intron. Probably assists in splicing its own and other chloroplast group II introns. The polypeptide is Maturase K (Lactuca sativa (Garden lettuce)).